The sequence spans 365 residues: Forkhead box protein H1 (365 aa).

The disordered stretch occupies residues 1–29 (MGPCSGSRLGPPEAESPSQPPKRRKKRYL). Residues 32–128 (DKPPYTYLAM…ALRLQNTALC (97 aa)) constitute a DNA-binding region (fork-head). The interval 151–215 (GRPYRPPSPP…TPPLPSSERP (65 aa)) is disordered. Pro residues predominate over residues 154–164 (YRPPSPPPPPS). The interval 273–354 (LWGQLPTSYL…VSHPRDLAAP (82 aa)) is SMAD-interaction domain (SID). The Fast/FoxH1 motif 1 (FM1) motif lies at 277 to 281 (LPTSY). Residues 287–293 (PNVVMPL) carry the Fast/FoxH1 motif 2 (FM2) motif. The SMAD interaction motif (SIM) motif lies at 327–348 (LDALFQGVPPNKSIYDVWVSHP).

As to quaternary structure, interacts with the MH2 domains of SMAD2 and SMAD3. As to expression, ubiquitous.

It localises to the nucleus. Transcriptional activator. Recognizes and binds to the DNA sequence 5'-TGT[GT][GT]ATT-3'. Required for induction of the goosecoid (GSC) promoter by TGF-beta or activin signaling. Forms a transcriptionally active complex containing FOXH1/SMAD2/SMAD4 on a site on the GSC promoter called TARE (TGF-beta/activin response element). The protein is Forkhead box protein H1 (FOXH1) of Homo sapiens (Human).